Reading from the N-terminus, the 104-residue chain is Urease subunit beta (104 aa).

This sequence belongs to the urease beta subunit family. As to quaternary structure, heterotrimer of UreA (gamma), UreB (beta) and UreC (alpha) subunits. Three heterotrimers associate to form the active enzyme.

The protein localises to the cytoplasm. The enzyme catalyses urea + 2 H2O + H(+) = hydrogencarbonate + 2 NH4(+). Its pathway is nitrogen metabolism; urea degradation; CO(2) and NH(3) from urea (urease route): step 1/1. The polypeptide is Urease subunit beta (Mycolicibacterium vanbaalenii (strain DSM 7251 / JCM 13017 / BCRC 16820 / KCTC 9966 / NRRL B-24157 / PYR-1) (Mycobacterium vanbaalenii)).